The primary structure comprises 623 residues: uncharacterized protein (623 aa).

Residues 1 to 18 (MSSRSGSADTFTQRSDSN) are compositionally biased toward polar residues. Disordered stretches follow at residues 1–107 (MSSR…DPFT), 132–181 (LGSD…EIGA), 207–231 (SWNLNSRHKRRDSNDRTVQSRADTD), 298–349 (REET…ESDQ), 384–464 (RKSV…DRNV), 533–553 (SINDLQQGTSSSQNQAMPPET), and 568–623 (VESR…TKGD). Over residues 25 to 34 (ISLDDVRDNN) the composition is skewed to basic and acidic residues. Positions 39 to 49 (SSSGISTTGSS) are enriched in low complexity. The segment covering 132-144 (LGSDTARPTSNGG) has biased composition (polar residues). Low complexity predominate over residues 165-177 (STSTWGPSGPTTP). Polar residues predominate over residues 328–339 (EKSTFSRISEQP). A compositionally biased stretch (low complexity) spans 400 to 417 (QTPTISTASSPIQPSSSP). A compositionally biased stretch (polar residues) spans 533–548 (SINDLQQGTSSSQNQA). Residues 604 to 614 (PSASPSTSRTR) show a composition bias toward low complexity.

This is an uncharacterized protein from Emericella nidulans (strain FGSC A4 / ATCC 38163 / CBS 112.46 / NRRL 194 / M139) (Aspergillus nidulans).